The primary structure comprises 150 residues: MSFRVGVLRVLLGVFFALTGAAKLFQVSAPVSQQMRALFEQFAEVFPLKVFGYQPDPISYQTAVGWLELLAGLLLVVGPPVLQEISNVLLILLMMGAVFTLVVLKEPLSTYVPAAVCLGLLLLLDSCHFLARTKGAVRCPSKKIPPAHGN.

Residues 1 to 21 form the signal peptide; sequence MSFRVGVLRVLLGVFFALTGA. 3 consecutive transmembrane segments (helical) span residues 62–82, 84–104, and 111–131; these read TAVGWLELLAGLLLVVGPPVL, EISNVLLILLMMGAVFTLVVL, and YVPAAVCLGLLLLLDSCHFLA.

It belongs to the DoxX family.

The protein localises to the membrane. In Mus musculus (Mouse), this protein is Transmembrane protein 35B.